A 291-amino-acid chain; its full sequence is ATP synthase gamma chain (291 aa).

It belongs to the ATPase gamma chain family. F-type ATPases have 2 components, CF(1) - the catalytic core - and CF(0) - the membrane proton channel. CF(1) has five subunits: alpha(3), beta(3), gamma(1), delta(1), epsilon(1). CF(0) has three main subunits: a, b and c.

The protein localises to the cell inner membrane. Its function is as follows. Produces ATP from ADP in the presence of a proton gradient across the membrane. The gamma chain is believed to be important in regulating ATPase activity and the flow of protons through the CF(0) complex. This chain is ATP synthase gamma chain, found in Cupriavidus necator (strain ATCC 17699 / DSM 428 / KCTC 22496 / NCIMB 10442 / H16 / Stanier 337) (Ralstonia eutropha).